Consider the following 153-residue polypeptide: Interleukin-2 (153 aa).

The signal sequence occupies residues 1 to 20 (MYRMQLLSCIALSLALVTNS). O-linked (GalNAc...) threonine glycosylation occurs at T23. C78 and C125 form a disulfide bridge.

It belongs to the IL-2 family.

It is found in the secreted. Its function is as follows. Cytokine produced by activated CD4-positive helper T-cells and to a lesser extend activated CD8-positive T-cells and natural killer (NK) cells that plays pivotal roles in the immune response and tolerance. Binds to a receptor complex composed of either the high-affinity trimeric IL-2R (IL2RA/CD25, IL2RB/CD122 and IL2RG/CD132) or the low-affinity dimeric IL-2R (IL2RB and IL2RG). Interaction with the receptor leads to oligomerization and conformation changes in the IL-2R subunits resulting in downstream signaling starting with phosphorylation of JAK1 and JAK3. In turn, JAK1 and JAK3 phosphorylate the receptor to form a docking site leading to the phosphorylation of several substrates including STAT5. This process leads to activation of several pathways including STAT, phosphoinositide-3-kinase/PI3K and mitogen-activated protein kinase/MAPK pathways. Functions as a T-cell growth factor and can increase NK-cell cytolytic activity as well. Promotes strong proliferation of activated B-cells and subsequently immunoglobulin production. Plays a pivotal role in regulating the adaptive immune system by controlling the survival and proliferation of regulatory T-cells, which are required for the maintenance of immune tolerance. Moreover, participates in the differentiation and homeostasis of effector T-cell subsets, including Th1, Th2, Th17 as well as memory CD8-positive T-cells. The polypeptide is Interleukin-2 (IL2) (Homo sapiens (Human)).